The primary structure comprises 315 residues: Putative peptide transport system permease protein BMEII0209 (315 aa).

Helical transmembrane passes span 13–33 (AIPV…LLPG), 102–122 (LALL…VVAA), 136–156 (LALL…VILF), 178–198 (WLRS…GYLA), 238–258 (VSVL…SVVI), and 287–307 (MLFL…LYTI). The ABC transmembrane type-1 domain maps to 96-305 (LPVTISLALL…AINVLVDILY (210 aa)).

This sequence belongs to the binding-protein-dependent transport system permease family. As to quaternary structure, the complex is composed of two ATP-binding proteins (BMEII0205 and BMEII0206), two transmembrane proteins (BMEII0207/BMEII0208 and BMEII0209) and a solute-binding protein (BMEII0210).

It localises to the cell inner membrane. Functionally, probably part of an ABC transporter complex that could be involved in peptide import. Probably responsible for the translocation of the substrate across the membrane. In Brucella melitensis biotype 1 (strain ATCC 23456 / CCUG 17765 / NCTC 10094 / 16M), this protein is Putative peptide transport system permease protein BMEII0209.